The sequence spans 237 residues: UDP-2,3-diacylglucosamine hydrolase (237 aa).

Mn(2+) is bound by residues Asp9, His11, Asp42, Asn80, and His115. 80 to 81 (NR) is a binding site for substrate. Asp123, Ser161, Lys165, Lys168, and His196 together coordinate substrate. 2 residues coordinate Mn(2+): His196 and His198.

Belongs to the LpxH family. Requires Mn(2+) as cofactor.

It is found in the cell inner membrane. It catalyses the reaction UDP-2-N,3-O-bis[(3R)-3-hydroxytetradecanoyl]-alpha-D-glucosamine + H2O = 2-N,3-O-bis[(3R)-3-hydroxytetradecanoyl]-alpha-D-glucosaminyl 1-phosphate + UMP + 2 H(+). It functions in the pathway glycolipid biosynthesis; lipid IV(A) biosynthesis; lipid IV(A) from (3R)-3-hydroxytetradecanoyl-[acyl-carrier-protein] and UDP-N-acetyl-alpha-D-glucosamine: step 4/6. Its function is as follows. Hydrolyzes the pyrophosphate bond of UDP-2,3-diacylglucosamine to yield 2,3-diacylglucosamine 1-phosphate (lipid X) and UMP by catalyzing the attack of water at the alpha-P atom. Involved in the biosynthesis of lipid A, a phosphorylated glycolipid that anchors the lipopolysaccharide to the outer membrane of the cell. This is UDP-2,3-diacylglucosamine hydrolase from Haemophilus influenzae (strain PittGG).